A 143-amino-acid chain; its full sequence is Period circadian protein (143 aa).

Residues 25-130 are disordered; sequence NSKPVTAPTQ…GPSLAADNSI (106 aa). 2 stretches are compositionally biased toward low complexity: residues 71-93 and 114-126; these read SGNC…ITGT and GGAA…SLAA.

As to quaternary structure, forms a heterodimer with timeless (TIM); the complex then translocates into the nucleus. Phosphorylated with a circadian rhythmicity, probably by the double-time protein (dbt). Phosphorylation could be implicated in the stability of per monomer and in the formation of heterodimer per-tim.

It is found in the nucleus. The protein resides in the cytoplasm. It localises to the perinuclear region. Functionally, essential for biological clock functions. Determines the period length of circadian and ultradian rhythms; an increase in PER dosage leads to shortened circadian rhythms and a decrease leads to lengthened circadian rhythms. Essential for the circadian rhythmicity of locomotor activity, eclosion behavior, and for the rhythmic component of the male courtship song that originates in the thoracic nervous system. The biological cycle depends on the rhythmic formation and nuclear localization of the TIM-PER complex. Light induces the degradation of TIM, which promotes elimination of PER. Nuclear activity of the heterodimer coordinatively regulates PER and TIM transcription through a negative feedback loop. Behaves as a negative element in circadian transcriptional loop. Does not appear to bind DNA, suggesting indirect transcriptional inhibition. This chain is Period circadian protein (per), found in Drosophila picticornis (Fruit fly).